Reading from the N-terminus, the 500-residue chain is ACT domain-containing protein ACR2 (500 aa).

ACT domains are found at residues 39 to 121 (VVKV…EANN), 136 to 213 (AIEM…ADPA), 298 to 373 (IVTV…RVCE), and 376 to 459 (KLEL…TVGS). Residues 450–478 (EDTKIDTVGSDEPTASASATPQRQPQPHR) are disordered. A compositionally biased stretch (polar residues) spans 462-474 (PTASASATPQRQP).

In terms of biological role, may bind amino acids. The sequence is that of ACT domain-containing protein ACR2 from Arabidopsis thaliana (Mouse-ear cress).